A 367-amino-acid polypeptide reads, in one-letter code: Probable 7-methylxanthine methyltransferase 2 (367 aa).

Tyr20 provides a ligand contact to S-adenosyl-L-homocysteine. Theobromine is bound at residue Thr27. Positions 64, 69, 101, 102, 134, and 135 each coordinate S-adenosyl-L-homocysteine. Residues Tyr152, His155, and Trp156 each coordinate theobromine. Residues Asn172, Asp258, Phe260, and Asn261 each coordinate Mg(2+). Phe313 serves as a coordination point for theobromine.

It belongs to the methyltransferase superfamily. Type-7 methyltransferase family. The cofactor is Mg(2+).

The enzyme catalyses 7-methylxanthine + S-adenosyl-L-methionine = theobromine + S-adenosyl-L-homocysteine + H(+). It functions in the pathway alkaloid biosynthesis. In terms of biological role, involved in the biosynthesis of theobromine. The polypeptide is Probable 7-methylxanthine methyltransferase 2 (Theobroma cacao (Cacao)).